A 225-amino-acid polypeptide reads, in one-letter code: MPSKQVGWWTMSEHTNDEVQPTALSGNDAVNRAAEQWKESAHRNIPGLGDLPIPDDTANLREGPNLHDGLLALLPLVGVWRGTGHADTAEEGQYAFGQQITFAHDGENYLTYESRIWKLDDEGNSTDLDYRESGFWRISLKDEIEVVLTHSTGVAEIFYGEPMNERAWQIESASTMVTAQGPATLGPGKRLYGLMPNNNLGWVDERMVDGEMRPRMSAELSRVIG.

A GXWXGXG motif is present at residues 78 to 84 (GVWRGTG).

It belongs to the nitrobindin family.

The sequence is that of Ferric nitrobindin-like protein from Corynebacterium diphtheriae (strain ATCC 700971 / NCTC 13129 / Biotype gravis).